Consider the following 98-residue polypeptide: Putative transcriptional regulator YdaS (98 aa).

Its function is as follows. When overexpressed, it induces Rac prophage excision, possibly to counteract the lethal toxicity of YdaT. Overexpression of ydaS or ydaST reduces growth and leads to loss of cell viability. May contribute to toxicity and morphological defects. The polypeptide is Putative transcriptional regulator YdaS (ydaS) (Escherichia coli (strain K12)).